A 95-amino-acid chain; its full sequence is Acylphosphatase (95 aa).

The Acylphosphatase-like domain occupies 10–95 (CIHATVSGKV…VEDYSDFRVR (86 aa)). Residues R25 and N43 contribute to the active site.

This sequence belongs to the acylphosphatase family.

The catalysed reaction is an acyl phosphate + H2O = a carboxylate + phosphate + H(+). The protein is Acylphosphatase (acyP) of Coxiella burnetii (strain Dugway 5J108-111).